Consider the following 289-residue polypeptide: Serine/threonine-protein phosphatase PGAM5, mitochondrial (289 aa).

The Mitochondrial matrix segment spans residues 1 to 6 (MAFRQA). A helical membrane pass occupies residues 7–29 (LQLAACGLAGGSAAVLFSAVAVG). The Mitochondrial intermembrane segment spans residues 30 to 289 (KPRAGGDAEP…FMPPDKITRS (260 aa)). The disordered stretch occupies residues 32 to 59 (RAGGDAEPRPAEPPAWAGGARPGPGVWD). Residues 45–56 (PAWAGGARPGPG) are compositionally biased toward low complexity. Residues 77–82 (NVESGE) are interaction with KEAP1. Phosphoserine occurs at positions 80 and 87. N6-acetyllysine is present on residues lysine 116, lysine 144, and lysine 191.

Belongs to the phosphoglycerate mutase family. BPG-dependent PGAM subfamily. In terms of assembly, dimer. Forms a ternary complex with NFE2L2 and KEAP1. Interacts with BCL2L1 and MAP3K5. Upon TNF-induced necrosis, forms in complex with RIPK1, RIPK3 and MLKL; the formation of this complex leads to PGAM5 phosphorylation. Isoform 2, but not isoform 1, interacts with DNM1L; this interaction leads to DNM1L dephosphorylation and activation and eventually to mitochondria fragmentation. Post-translationally, both isoform 1 and isoform 2 are phosphorylated by the RIPK1/RIPK3 complex under necrotic conditions. This phosphorylation increases PGAM5 phosphatase activity. Proteolytically cleaved by PARL in response to loss of mitochondrial membrane potential.

It is found in the mitochondrion outer membrane. The protein resides in the mitochondrion inner membrane. The catalysed reaction is O-phospho-L-seryl-[protein] + H2O = L-seryl-[protein] + phosphate. It carries out the reaction O-phospho-L-threonyl-[protein] + H2O = L-threonyl-[protein] + phosphate. Its function is as follows. Mitochondrial serine/threonine phosphatase that dephosphorylates various substrates and thus plays a role in different biological processes including cellular senescence or mitophagy. Modulates cellular senescence by regulating mitochondrial dynamics. Mechanistically, participates in mitochondrial fission through dephosphorylating DNM1L/DRP1. Additionally, dephosphorylates MFN2 in a stress-sensitive manner and consequently protects it from ubiquitination and degradation to promote mitochondrial network formation. Regulates mitophagy independent of PARKIN by interacting with and dephosphorylating FUNDC1, which interacts with LC3. Regulates anti-oxidative response by forming a tertiary complex with KEAP1 and NRF2. Regulates necroptosis by acting as a RIPK3 target and recruiting the RIPK1-RIPK3-MLKL necrosis 'attack' complex to mitochondria. In Homo sapiens (Human), this protein is Serine/threonine-protein phosphatase PGAM5, mitochondrial (PGAM5).